We begin with the raw amino-acid sequence, 182 residues long: Cytidylate kinase (182 aa).

7-15 is an ATP binding site; sequence GPPGSGKSS.

The protein belongs to the cytidylate kinase family. Type 2 subfamily.

It localises to the cytoplasm. The enzyme catalyses CMP + ATP = CDP + ADP. The catalysed reaction is dCMP + ATP = dCDP + ADP. The chain is Cytidylate kinase (cmk) from Sulfolobus acidocaldarius (strain ATCC 33909 / DSM 639 / JCM 8929 / NBRC 15157 / NCIMB 11770).